We begin with the raw amino-acid sequence, 1626 residues long: RNA2 polyprotein (1626 aa).

Disordered stretches follow at residues 84–107 (KHSK…ARAA) and 1042–1066 (GRSN…RDAP). The span at 92-104 (PNGSVTTKRSNSA) shows a compositional bias: polar residues.

This sequence belongs to the nepoviruses RNA2 polyprotein family. Post-translationally, specific enzymatic cleavages in vivo by the P1 encoded 3C-like protease yield mature proteins.

The protein resides in the host cell junction. It localises to the host plasmodesma. The protein localises to the virion. Implicated in RNA2 replication. Could also be required for nematode transmission of the virus. Functionally, transports viral genome to neighboring plant cells directly through plasmosdesmata, without any budding. The movement protein allows efficient cell to cell propagation, by bypassing the host cell wall barrier. Acts by forming a tubular structure at the host plasmodesmata, enlarging it enough to allow free passage of virion capsids. This Blackcurrant reversion association virus (BRAV) protein is RNA2 polyprotein.